We begin with the raw amino-acid sequence, 260 residues long: Carbonic anhydrase 2 (260 aa).

Ser2 is modified (N-acetylserine). Ser2 carries the post-translational modification Phosphoserine. The Alpha-carbonic anhydrase domain maps to 3–259 (HHWGYGEHNG…LKNRQVRVFP (257 aa)). His64 (proton donor/acceptor) is an active-site residue. Zn(2+)-binding residues include His94, His96, and His119. 2 positions are modified to phosphoserine: Ser165 and Ser172. Residue 198–199 (TN) participates in substrate binding.

It belongs to the alpha-carbonic anhydrase family. As to quaternary structure, interacts with SLC4A4 and SLC26A6. Interaction with SLC4A7 regulates SLC4A7 transporter activity. It depends on Zn(2+) as a cofactor.

Its subcellular location is the cytoplasm. It is found in the cell membrane. The catalysed reaction is hydrogencarbonate + H(+) = CO2 + H2O. The enzyme catalyses urea = cyanamide + H2O. Its activity is regulated as follows. Inhibited by acetazolamide. Catalyzes the reversible hydration of carbon dioxide. Can also hydrate cyanamide to urea. Involved in the regulation of fluid secretion into the anterior chamber of the eye. Essential for bone resorption and osteoclast differentiation. Contributes to intracellular pH regulation in the duodenal upper villous epithelium during proton-coupled peptide absorption. Stimulates the chloride-bicarbonate exchange activity of SLC26A6. The polypeptide is Carbonic anhydrase 2 (CA2) (Ovis aries (Sheep)).